The primary structure comprises 420 residues: Torsin-4A (420 aa).

Residues 130–150 (CLLLFIAIVCFQIFNAIENLD) traverse the membrane as a helical segment. 202–209 (GPSGVGKS) is a binding site for ATP.

Belongs to the ClpA/ClpB family. Torsin subfamily.

Its subcellular location is the membrane. The polypeptide is Torsin-4A (tor4a) (Xenopus tropicalis (Western clawed frog)).